The following is a 142-amino-acid chain: Large ribosomal subunit protein uL13 (142 aa).

It belongs to the universal ribosomal protein uL13 family. As to quaternary structure, part of the 50S ribosomal subunit.

In terms of biological role, this protein is one of the early assembly proteins of the 50S ribosomal subunit, although it is not seen to bind rRNA by itself. It is important during the early stages of 50S assembly. The sequence is that of Large ribosomal subunit protein uL13 from Xylella fastidiosa (strain 9a5c).